Reading from the N-terminus, the 423-residue chain is Adenylosuccinate synthetase (423 aa).

Residues 11-17 (GDEGKGK) and 39-41 (GHT) each bind GTP. Asp12 (proton acceptor) is an active-site residue. Positions 12 and 39 each coordinate Mg(2+). IMP is bound by residues 12–15 (DEGK), 37–40 (NAGH), Thr129, Arg143, Asn219, Thr234, and Arg298. Catalysis depends on His40, which acts as the Proton donor. Residue 294–300 (VTTGRRR) coordinates substrate. GTP-binding positions include Arg300, 326 to 328 (KLD), and 411 to 413 (GTG).

It belongs to the adenylosuccinate synthetase family. Homodimer. The cofactor is Mg(2+).

It is found in the cytoplasm. It carries out the reaction IMP + L-aspartate + GTP = N(6)-(1,2-dicarboxyethyl)-AMP + GDP + phosphate + 2 H(+). Its pathway is purine metabolism; AMP biosynthesis via de novo pathway; AMP from IMP: step 1/2. Plays an important role in the de novo pathway and in the salvage pathway of purine nucleotide biosynthesis. Catalyzes the first committed step in the biosynthesis of AMP from IMP. This Penicillium rubens (strain ATCC 28089 / DSM 1075 / NRRL 1951 / Wisconsin 54-1255) (Penicillium chrysogenum) protein is Adenylosuccinate synthetase.